The following is a 429-amino-acid chain: Gap junction gamma-2 protein (429 aa).

At 1 to 25 (MTNMSWSFLTRLLEEIHNHSTFVGK) the chain is on the cytoplasmic side. The chain crosses the membrane as a helical span at residues 26–46 (VWLTVLVVFRIVLTAVGGESI). The Extracellular segment spans residues 47–78 (YSDEQTKFTCNTRQPGCDNVCYDAFAPLSHVR). A helical membrane pass occupies residues 79-99 (FWVFQIVVISTPSVMYLGYAV). Residues 100 to 214 (HRLARASQDE…EGLMRVYVAQ (115 aa)) lie on the Cytoplasmic side of the membrane. The segment at 106–200 (SQDERRRASR…GPAGQHDGRR (95 aa)) is disordered. The span at 112–123 (RASRRRPSRRAP) shows a compositional bias: basic residues. Over residues 124-138 (RPPLPLPPPPHPGWP) the composition is skewed to pro residues. Acidic residues predominate over residues 142–173 (DLGEEEPMLGLGEEDEDPGVAEGLGEDEEAED). Residues 215 to 235 (LVARAAFEVAFLVGQYLLYGF) traverse the membrane as a helical segment. The Extracellular portion of the chain corresponds to 236 to 263 (EVRPFFACSRQPCPHVVDCFVSRPTEKT). The helical transmembrane segment at 264-284 (VFLLVMYVVSCLCLLLNLCEM) threads the bilayer. At 285-429 (AHLGLGNAQD…SREGKTTVWI (145 aa)) the chain is on the cytoplasmic side. 2 disordered regions span residues 296–316 (VRGR…PPCA) and 361–429 (LGDL…TVWI). Positions 303–316 (PASPGPMPRPPPCA) are enriched in pro residues. The residue at position 366 (Ser-366) is a Phosphoserine. Over residues 372-395 (LPANARGPPKPGAPASGSGSATSG) the composition is skewed to low complexity.

Belongs to the connexin family. Gamma-type subfamily. As to quaternary structure, a connexon is composed of a hexamer of connexins. Interacts with TJP1.

It is found in the cell membrane. The protein localises to the cell junction. It localises to the gap junction. One gap junction consists of a cluster of closely packed pairs of transmembrane channels, the connexons, through which materials of low MW diffuse from one cell to a neighboring cell. May play a role in myelination in central and peripheral nervous systems. This is Gap junction gamma-2 protein (GJC2) from Bos taurus (Bovine).